The primary structure comprises 465 residues: Cysteine--tRNA ligase (465 aa).

Cysteine 27 serves as a coordination point for Zn(2+). The 'HIGH' region signature appears at 29–39 (PTVYNFFHIGN). Cysteine 207, histidine 232, and glutamate 236 together coordinate Zn(2+). A 'KMSKS' region motif is present at residues 264–268 (KMSKS). Lysine 267 contacts ATP.

Belongs to the class-I aminoacyl-tRNA synthetase family. As to quaternary structure, monomer. The cofactor is Zn(2+).

It localises to the cytoplasm. The catalysed reaction is tRNA(Cys) + L-cysteine + ATP = L-cysteinyl-tRNA(Cys) + AMP + diphosphate. The sequence is that of Cysteine--tRNA ligase from Clostridium botulinum (strain ATCC 19397 / Type A).